Consider the following 97-residue polypeptide: Probable lipopolysaccharide assembly protein A (97 aa).

2 helical membrane passes run Met1–Ile21 and Val46–Ile66. Residues Lys67–Lys95 adopt a coiled-coil conformation.

This sequence belongs to the LapA family.

The protein localises to the cell inner membrane. In terms of biological role, involved in the assembly of lipopolysaccharide (LPS). In Haemophilus influenzae (strain ATCC 51907 / DSM 11121 / KW20 / Rd), this protein is Probable lipopolysaccharide assembly protein A.